Consider the following 456-residue polypeptide: Amino acid transporter AVT6B (456 aa).

Helical transmembrane passes span 37–57, 58–78, 118–138, 164–184, 191–211, 236–256, 273–293, 328–348, 365–385, 388–408, and 423–443; these read FSGAVFNLATTIIGAGIMALP, ATMKILGLIPGITIIVLMAFL, ILVSNIGVLIVYMIIIGDVLA, TFVLLVTTLTVFAPLTCFKRI, SAISVALAVVFLVITAGITII, LFTVVPVLVNAYICHYNVHSI, ALAMCSSVYVMTSLFGYLLFG, LMLVFPVVFYPLRINIDGLIF, SITAGLIAVIFLGANFIPSIW, FQFTGATAAVCIGFIFPAAVI, and IAICMIVLAVFSNAIAIYSDA.

This sequence belongs to the amino acid/polyamine transporter 2 family. Amino acid/auxin permease (AAAP) (TC 2.A.18.6) subfamily.

It localises to the membrane. This chain is Amino acid transporter AVT6B, found in Arabidopsis thaliana (Mouse-ear cress).